We begin with the raw amino-acid sequence, 535 residues long: Dimethylaniline monooxygenase [N-oxide-forming] 2 (535 aa).

A2 is subject to N-acetylalanine. Residues 9 to 13 (GAGVS), E32, 40 to 41 (VW), and 61 to 62 (NT) contribute to the FAD site. NADP(+) contacts are provided by residues 60 to 61 (TN) and 195 to 198 (SGSD). A Glycyl lysine isopeptide (Lys-Gly) (interchain with G-Cter in SUMO) cross-link involves residue K492. A helical transmembrane segment spans residues 510–530 (FSVSFLLKILGLLAVVVAFFC).

This sequence belongs to the FMO family. Requires FAD as cofactor. It depends on Mg(2+) as a cofactor.

It is found in the microsome membrane. The protein resides in the endoplasmic reticulum membrane. Its function is as follows. Catalyzes the oxidative metabolism of numerous xenobiotics, including mainly therapeutic drugs and insecticides that contain a soft nucleophile, most commonly nitrogen and sulfur and participates to their bioactivation. The protein is Dimethylaniline monooxygenase [N-oxide-forming] 2 of Pan troglodytes (Chimpanzee).